A 243-amino-acid chain; its full sequence is Probable transcriptional regulatory protein Ldb0677 (243 aa).

The segment at 1–22 (MSGHSKWHNIQGRKNAQDAKRG) is disordered.

This sequence belongs to the TACO1 family.

It is found in the cytoplasm. The protein is Probable transcriptional regulatory protein Ldb0677 of Lactobacillus delbrueckii subsp. bulgaricus (strain ATCC 11842 / DSM 20081 / BCRC 10696 / JCM 1002 / NBRC 13953 / NCIMB 11778 / NCTC 12712 / WDCM 00102 / Lb 14).